A 176-amino-acid polypeptide reads, in one-letter code: MEWKSTTVLVVSRNGKTVMAGDGQVTYGNTVMKHGARKIRKIGDGQVLAGFAGSVADAMALFDRFESKLKEWGGNLTKAAVELAKDWRTDRVLRRLEALLLVADRDNVLIISGTGEVVQPDDNVAAIGSGAPYAIAAARALIRNTDLDAREIVEKSMQIASEICIYTNGNITIEEI.

T6 is an active-site residue. Residues S161, C164, and T167 each coordinate Na(+).

It belongs to the peptidase T1B family. HslV subfamily. As to quaternary structure, a double ring-shaped homohexamer of HslV is capped on each side by a ring-shaped HslU homohexamer. The assembly of the HslU/HslV complex is dependent on binding of ATP.

The protein resides in the cytoplasm. It carries out the reaction ATP-dependent cleavage of peptide bonds with broad specificity.. With respect to regulation, allosterically activated by HslU binding. In terms of biological role, protease subunit of a proteasome-like degradation complex believed to be a general protein degrading machinery. This Pseudothermotoga lettingae (strain ATCC BAA-301 / DSM 14385 / NBRC 107922 / TMO) (Thermotoga lettingae) protein is ATP-dependent protease subunit HslV.